Here is a 448-residue protein sequence, read N- to C-terminus: Phosphoglucosamine mutase (448 aa).

The active-site Phosphoserine intermediate is S100. Residues S100, D240, D242, and D244 each contribute to the Mg(2+) site. A Phosphoserine modification is found at S100.

This sequence belongs to the phosphohexose mutase family. The cofactor is Mg(2+). Activated by phosphorylation.

The catalysed reaction is alpha-D-glucosamine 1-phosphate = D-glucosamine 6-phosphate. Its function is as follows. Catalyzes the conversion of glucosamine-6-phosphate to glucosamine-1-phosphate. This is Phosphoglucosamine mutase from Clostridium beijerinckii (strain ATCC 51743 / NCIMB 8052) (Clostridium acetobutylicum).